Here is a 369-residue protein sequence, read N- to C-terminus: Putative F-box protein At1g70960 (369 aa).

Residues 3 to 54 (NTSFETLPRHMQMEILSRVPLKFLMKFMCVSKKWASIIRGEEFREDYLFQSM) enclose the F-box domain.

This chain is Putative F-box protein At1g70960, found in Arabidopsis thaliana (Mouse-ear cress).